The chain runs to 855 residues: Pre-mRNA-splicing factor SYF1 (855 aa).

HAT repeat units lie at residues 15-47 (LVFE…FKQG), 48-80 (APKP…ARRA), 90-122 (PAYE…FLMD), 124-158 (GRVT…FLRS), 160-192 (PLPE…SSDR), 198-230 (QRLA…LISQ), 235-268 (VQSL…YYIR), 270-305 (GHFE…FEES), and 369-407 (GRPR…FYED). Lys420 carries the post-translational modification N6-acetyllysine. 5 HAT repeats span residues 498 to 530 (GTFQ…FLEE), 532 to 566 (KYFE…KFIS), 571 to 605 (RKLE…LEEE), 643 to 677 (YGVT…MECK), and 679 to 713 (GEID…FEVR). Positions 808-855 (AELAQQANPEEIQLGEDEDEDEMDLEPNEVRLEQQSVPAAVFGSLKED) are disordered. Residues 820 to 834 (QLGEDEDEDEMDLEP) show a composition bias toward acidic residues. Residue Ser851 is modified to Phosphoserine.

It belongs to the crooked-neck family. Associates with RNA polymerase II, the TCR-specific proteins CKN1/CSA and ERCC6/CSB, and XPA. Identified in the spliceosome C complex. Component of the XAB2 complex, a multimeric protein complex composed of XAB2, PRPF19, AQR, ZNF830, ISY1, and PPIE. Identified in a pentameric intron-binding (IB) complex composed of AQR, XAB2, ISY1, ZNF830 and PPIE that is incorporated into the spliceosome as a preassembled complex. The IB complex does not contain PRPF19.

The protein resides in the nucleus. Functionally, involved in pre-mRNA splicing as component of the spliceosome. Involved in transcription-coupled repair (TCR), transcription and pre-mRNA splicing. The protein is Pre-mRNA-splicing factor SYF1 (Xab2) of Rattus norvegicus (Rat).